A 239-amino-acid polypeptide reads, in one-letter code: ATP-dependent dethiobiotin synthetase BioD (239 aa).

ATP is bound at residue 22 to 27; sequence GIGKTV. Residue threonine 26 coordinates Mg(2+). Lysine 47 is an active-site residue. Threonine 51 is a binding site for substrate. ATP contacts are provided by residues aspartate 59, 124–127, and 184–185; these read EGVG and NR. Residues aspartate 59 and glutamate 124 each contribute to the Mg(2+) site.

This sequence belongs to the dethiobiotin synthetase family. Homodimer. Mg(2+) is required as a cofactor.

The protein localises to the cytoplasm. It catalyses the reaction (7R,8S)-7,8-diammoniononanoate + CO2 + ATP = (4R,5S)-dethiobiotin + ADP + phosphate + 3 H(+). The protein operates within cofactor biosynthesis; biotin biosynthesis; biotin from 7,8-diaminononanoate: step 1/2. Its function is as follows. Catalyzes a mechanistically unusual reaction, the ATP-dependent insertion of CO2 between the N7 and N8 nitrogen atoms of 7,8-diaminopelargonic acid (DAPA, also called 7,8-diammoniononanoate) to form a ureido ring. The protein is ATP-dependent dethiobiotin synthetase BioD of Chlorobaculum tepidum (strain ATCC 49652 / DSM 12025 / NBRC 103806 / TLS) (Chlorobium tepidum).